Reading from the N-terminus, the 500-residue chain is Cytochrome P450 2D15 (500 aa).

Cys-446 is a binding site for heme.

It belongs to the cytochrome P450 family. The cofactor is heme. Liver. Also detected in several other tissues.

It localises to the endoplasmic reticulum membrane. Its subcellular location is the microsome membrane. It catalyses the reaction an organic molecule + reduced [NADPH--hemoprotein reductase] + O2 = an alcohol + oxidized [NADPH--hemoprotein reductase] + H2O + H(+). Functionally, high activity for the hydroxylation of bunitrolol and imipramine; low activity on debrisoquine. The sequence is that of Cytochrome P450 2D15 (CYP2D15) from Canis lupus familiaris (Dog).